We begin with the raw amino-acid sequence, 198 residues long: Ribosomal RNA small subunit methyltransferase G (198 aa).

S-adenosyl-L-methionine-binding positions include Gly-74, Phe-79, 123 to 124 (IQ), and Arg-136.

The protein belongs to the methyltransferase superfamily. RNA methyltransferase RsmG family.

The protein resides in the cytoplasm. It catalyses the reaction guanosine(527) in 16S rRNA + S-adenosyl-L-methionine = N(7)-methylguanosine(527) in 16S rRNA + S-adenosyl-L-homocysteine. Its function is as follows. Specifically methylates the N7 position of guanine in position 527 of 16S rRNA. In Orientia tsutsugamushi (strain Ikeda) (Rickettsia tsutsugamushi), this protein is Ribosomal RNA small subunit methyltransferase G.